A 1381-amino-acid chain; its full sequence is DNA-directed RNA polymerase subunit beta'' (1381 aa).

Zn(2+) contacts are provided by Cys-220, Cys-293, Cys-300, and Cys-303.

The protein belongs to the RNA polymerase beta' chain family. RpoC2 subfamily. In plastids the minimal PEP RNA polymerase catalytic core is composed of four subunits: alpha, beta, beta', and beta''. When a (nuclear-encoded) sigma factor is associated with the core the holoenzyme is formed, which can initiate transcription. The cofactor is Zn(2+).

The protein resides in the plastid. Its subcellular location is the chloroplast. The catalysed reaction is RNA(n) + a ribonucleoside 5'-triphosphate = RNA(n+1) + diphosphate. Its function is as follows. DNA-dependent RNA polymerase catalyzes the transcription of DNA into RNA using the four ribonucleoside triphosphates as substrates. This is DNA-directed RNA polymerase subunit beta'' from Draba nemorosa (Woodland whitlowgrass).